A 512-amino-acid polypeptide reads, in one-letter code: Retinaldehyde dehydrogenase 3 (512 aa).

Residues 1–23 (MATANGAVENGQPDGKPPALPRP) are disordered. At Ala2 the chain carries N-acetylalanine. Residues Lys204, Glu207, and 257–262 (GSTEVG) contribute to the NAD(+) site. Residue Glu280 is the Proton acceptor of the active site. Residue Cys314 is the Nucleophile of the active site. The NAD(+) site is built by Gln361 and Glu411.

Belongs to the aldehyde dehydrogenase family. As to quaternary structure, homotetramer.

It is found in the cytoplasm. It catalyses the reaction all-trans-retinal + NAD(+) + H2O = all-trans-retinoate + NADH + 2 H(+). The catalysed reaction is retinal + NAD(+) + H2O = retinoate + NADH + 2 H(+). The enzyme catalyses all-trans-13,14-dihydroretinal + NAD(+) + H2O = all-trans-13,14-dihydroretinoate + NADH + 2 H(+). It participates in cofactor metabolism; retinol metabolism. Its function is as follows. Catalyzes the NAD-dependent oxidation of aldehyde substrates, such as all-trans-retinal and all-trans-13,14-dihydroretinal, to their corresponding carboxylic acids, all-trans-retinoate and all-trans-13,14-dihydroretinoate, respectively. High specificity for all-trans-retinal as substrate, can also accept acetaldehyde as substrate in vitro but with lower affinity. Required for the biosynthesis of normal levels of retinoate in the embryonic ocular and nasal regions; a critical lipid in the embryonic development of the eye and the nasal region. In Rattus norvegicus (Rat), this protein is Retinaldehyde dehydrogenase 3 (Aldh1a3).